The following is a 140-amino-acid chain: Large ribosomal subunit protein bL34m (140 aa).

Belongs to the bacterial ribosomal protein bL34 family. In terms of assembly, component of the mitochondrial large ribosomal subunit (mt-LSU). Mature N.crassa 74S mitochondrial ribosomes consist of a small (37S) and a large (54S) subunit. The 37S small subunit contains a 16S ribosomal RNA (16S mt-rRNA) and 32 different proteins. The 54S large subunit contains a 23S rRNA (23S mt-rRNA) and 42 different proteins.

It is found in the mitochondrion. Component of the mitochondrial ribosome (mitoribosome), a dedicated translation machinery responsible for the synthesis of mitochondrial genome-encoded proteins, including at least some of the essential transmembrane subunits of the mitochondrial respiratory chain. The mitoribosomes are attached to the mitochondrial inner membrane and translation products are cotranslationally integrated into the membrane. In Neurospora crassa (strain ATCC 24698 / 74-OR23-1A / CBS 708.71 / DSM 1257 / FGSC 987), this protein is Large ribosomal subunit protein bL34m (mrpl34).